The following is a 121-amino-acid chain: Aspartate 1-decarboxylase (121 aa).

Serine 25 (schiff-base intermediate with substrate; via pyruvic acid) is an active-site residue. Serine 25 bears the Pyruvic acid (Ser) mark. Threonine 57 contributes to the substrate binding site. Tyrosine 58 serves as the catalytic Proton donor. 73 to 75 is a substrate binding site; sequence GAA.

Belongs to the PanD family. In terms of assembly, heterooctamer of four alpha and four beta subunits. Pyruvate is required as a cofactor. Post-translationally, is synthesized initially as an inactive proenzyme, which is activated by self-cleavage at a specific serine bond to produce a beta-subunit with a hydroxyl group at its C-terminus and an alpha-subunit with a pyruvoyl group at its N-terminus.

It localises to the cytoplasm. It carries out the reaction L-aspartate + H(+) = beta-alanine + CO2. It functions in the pathway cofactor biosynthesis; (R)-pantothenate biosynthesis; beta-alanine from L-aspartate: step 1/1. Functionally, catalyzes the pyruvoyl-dependent decarboxylation of aspartate to produce beta-alanine. The polypeptide is Aspartate 1-decarboxylase (Wolinella succinogenes (strain ATCC 29543 / DSM 1740 / CCUG 13145 / JCM 31913 / LMG 7466 / NCTC 11488 / FDC 602W) (Vibrio succinogenes)).